The primary structure comprises 937 residues: Protein SEY1 homolog (937 aa).

Over 1–848 (MEKGVEKTQI…ETGSKMSLKN (848 aa)) the chain is Cytoplasmic. In terms of domain architecture, GB1/RHD3-type G spans 34–280 (GFSYNVIAVL…IPSDGFAQYC (247 aa)). Residue 44–51 (GSQSSGKS) participates in GTP binding. 2 coiled-coil regions span residues 319-339 (NKEI…NFKE) and 725-750 (YLDE…IIIQ). Residues 849-869 (VPVVFWIILLLFGWNEILFFI) traverse the membrane as a helical segment. The Lumenal portion of the chain corresponds to 870-872 (RMF). The chain crosses the membrane as a helical span at residues 873 to 893 (FKLNVILPLFFAAAFIVSTFV). The Cytoplasmic portion of the chain corresponds to 894–937 (YNGNTQALSYINKIIFYMAKNSYNFFKHIQAISNPPPKNVQKQE).

It belongs to the TRAFAC class dynamin-like GTPase superfamily. GB1/RHD3 GTPase family. RHD3 subfamily.

Its subcellular location is the endoplasmic reticulum membrane. In terms of biological role, probable GTP-binding protein involved in generating and maintaining the structure of the tubular endoplasmic reticulum network. This chain is Protein SEY1 homolog, found in Plasmodium falciparum (isolate 3D7).